Reading from the N-terminus, the 1458-residue chain is MVNTRKSSLRLLGSKSPGPGPGPGAGAEPGATGGSSHFISSRTRSSKTRAASCPAAKAGGSGGAGVTLDEARKVEVDGSLSDSHVSPPAKRTLKQPDSVCKDKSKSRSTGQREEWNLSTGQARLTSQPGATLPNGHSGLSLRSHPLRGEKKGDGDLSCINGDMEVRKSCRSRKNRFESVNQSLLFDQLVNSTAEAVLQEMDNINIRRNRRSGEVERLRMWTDTEFENMDMYSRVKRRRKSLRRNSYGIQNHHEVSTEGEEEESQEEDGDIEVEEAEGEENDRPYNLRQRKTVDRYQAPPIVPAHQKKRENTLFDIHRSPARRSHIRRKKHAIHSSDTTSSDEERFERRKSKSMARARNRCLPMNFRAEDLASGILRERVKVGASLADVDPMNIDKSVRFDSIGGLSHHIHALKEMVVFPLLYPEIFEKFKIQPPRGCLFYGPPGTGKTLVARALANECSQGDKKVAFFMRKGADCLSKWVGESERQLRLLFDQAYLMRPSIIFFDEIDGLAPVRSSRQDQIHSSIVSTLLALMDGLDNRGEIVVIGATNRLDSIDPALRRPGRFDREFLFNLPDQKARKHILQIHTRDWNPKLSDAFLGELAEKCVGYCGADIKALCTEAALIALRRRYPQIYASSHKLQLDVSSIVLSAQDFYHAMQNIVPASQRAVMSSGHALSPIIRPLLERSFNNILAVLQKVFPHAEISQSDKKEDIETLILEDSEDENALSIFETNCHSGSPKKQSSSAAIHKPYLHFTMSPYHQPTSYRPRLLLSGERGSGQTSHLAPALLHTLERFSVHRLDLPALYSVSAKTPEESCAQIFREARRTVPSIVYMPHIGDWWEAVSETVRATFLTLLQDIPSFSPIFLLSTSETMYSELPEEVKCIFRIQYEEVLYIQRPIEEDRRKFFQELILNQASMAPPRRKHAALCAMEVLPLALPSPPRQLSESEKSRMEDQEENTLRELRLFLRDVTKRLATDKRFNIFSKPVDIEEVSDYLEVIKEPMDLSTVITKIDKHNYLTAKDFLKDIDLICSNALEYNPDKDPGDKIIRHRACTLKDTAHAIIAAELDPEFNKLCEEIKEARIKRGLSVTSEQINPHSTGARKTETRVEEAFRHKQRNPMDVWHNSANKCAFRVRRKSRRRSQWGKGIIKKRKVNNLKKDEEDTKFADYENHTEDRKLLENGEFEVSTDCHEENGEETGDLSMTNDESSCDIMDLDQGQRLNNGAGTKENFASTEEESSNESLLVNSSSSLNPEQTSRKETFLKGNCLNGEASTDSFEGIPVLECQNGKLEVVSFCDSGDKCSSEQKILLEDQSKEKPETSTENHGDDLEKLEALECSNNEKLEPGSDVEVKDAELDKEGASKVKKYRKLILEQAKTTSLELVPEEPSEPVPPLIVDRERLKKLLDLLVDKSNNLAVDQLERLYSLLSQCIYRHRKDYDKSQLVEEMERTVHMFETFL.

A disordered region spans residues 1–155 (MVNTRKSSLR…LRGEKKGDGD (155 aa)). Serine 16 is modified (phosphoserine). Gly residues predominate over residues 23–33 (PGAGAEPGATG). Residues 34-58 (GSSHFISSRTRSSKTRAASCPAAKA) show a composition bias toward low complexity. Phosphoserine occurs at positions 79, 81, and 86. The segment covering 99–115 (VCKDKSKSRSTGQREEW) has biased composition (basic and acidic residues). Positions 116–129 (NLSTGQARLTSQPG) are enriched in polar residues. Serine 140 carries the post-translational modification Phosphoserine. A Phosphothreonine modification is found at threonine 221. A disordered region spans residues 244–286 (NSYGIQNHHEVSTEGEEEESQEEDGDIEVEEAEGEENDRPYNL). The span at 256–279 (TEGEEEESQEEDGDIEVEEAEGEE) shows a compositional bias: acidic residues. Serine 318 is modified (phosphoserine). Residues 321-332 (RRSHIRRKKHAI) show a composition bias toward basic residues. The segment at 321–353 (RRSHIRRKKHAIHSSDTTSSDEERFERRKSKSM) is disordered. Position 441-448 (441-448 (GPPGTGKT)) interacts with ATP. Serine 939 bears the Phosphoserine mark. Residues 943–974 (QLSESEKSRMEDQEENTLRELRLFLRDVTKRL) are a coiled coil. A Bromo domain is found at 951–1066 (RMEDQEENTL…DTAHAIIAAE (116 aa)). Disordered regions lie at residues 1189-1208 (DCHE…NDES), 1217-1257 (QGQR…EQTS), and 1309-1330 (LLED…DDLE). A compositionally biased stretch (low complexity) spans 1240–1252 (NESLLVNSSSSLN). Phosphoserine occurs at positions 1338 and 1347.

The protein belongs to the AAA ATPase family. In terms of assembly, binds acetylated lysine residues in histone H1.4, H2A, H2B, H3 and H4 (in vitro).

Its subcellular location is the nucleus. This is ATPase family AAA domain-containing protein 2B (ATAD2B) from Homo sapiens (Human).